A 690-amino-acid chain; its full sequence is DNA ligase (690 aa).

NAD(+)-binding positions include 36–40 (DAVYD), 85–86 (SL), and glutamate 124. Lysine 126 serves as the catalytic N6-AMP-lysine intermediate. Residues arginine 147, glutamate 184, lysine 308, and lysine 332 each coordinate NAD(+). Residues cysteine 426, cysteine 429, cysteine 444, and cysteine 449 each coordinate Zn(2+). The 77-residue stretch at 614–690 (NQSNVFDGKS…INENELKLLL (77 aa)) folds into the BRCT domain.

The protein belongs to the NAD-dependent DNA ligase family. LigA subfamily. Mg(2+) serves as cofactor. The cofactor is Mn(2+).

The enzyme catalyses NAD(+) + (deoxyribonucleotide)n-3'-hydroxyl + 5'-phospho-(deoxyribonucleotide)m = (deoxyribonucleotide)n+m + AMP + beta-nicotinamide D-nucleotide.. Its function is as follows. DNA ligase that catalyzes the formation of phosphodiester linkages between 5'-phosphoryl and 3'-hydroxyl groups in double-stranded DNA using NAD as a coenzyme and as the energy source for the reaction. It is essential for DNA replication and repair of damaged DNA. The sequence is that of DNA ligase from Prochlorococcus marinus (strain NATL1A).